A 685-amino-acid chain; its full sequence is Serine/threonine-protein kinase PLK2 (685 aa).

Residues 24 to 71 (KGCGADSKKKRPPQPPEESQPPQSQAQVPPAAAHHHHHHSHSGPEISR) are disordered. A compositionally biased stretch (low complexity) spans 43–55 (QPPQSQAQVPPAA). Positions 82–334 (YCRGKVLGKG…LDDIIRHDFF (253 aa)) constitute a Protein kinase domain. ATP-binding positions include 88-96 (LGKGGFAKC) and Lys111. The active-site Proton acceptor is Asp205. Position 239 is a phosphothreonine (Thr239). Residues 406–433 (SITQQPSKHRTDEELQPPTTTVARSGTP) form a disordered region. POLO box domains are found at residues 503 to 581 (WVTK…YMEE) and 601 to 685 (YLLQ…QRCN).

It belongs to the protein kinase superfamily. Ser/Thr protein kinase family. CDC5/Polo subfamily. Interacts with NSF; causing NSF dissociation from GRIA2. Interacts with CIB1. Post-translationally, catalytic activity is enhanced by phosphorylation of Thr-239.

The protein localises to the cytoplasm. Its subcellular location is the cytoskeleton. It is found in the microtubule organizing center. The protein resides in the centrosome. It localises to the centriole. The protein localises to the cell projection. Its subcellular location is the dendrite. The enzyme catalyses L-seryl-[protein] + ATP = O-phospho-L-seryl-[protein] + ADP + H(+). It catalyses the reaction L-threonyl-[protein] + ATP = O-phospho-L-threonyl-[protein] + ADP + H(+). With respect to regulation, activated by phosphorylation of Thr-239. Once activated, activity is stimulated by binding target proteins. Functionally, tumor suppressor serine/threonine-protein kinase involved in synaptic plasticity, centriole duplication and G1/S phase transition. Polo-like kinases act by binding and phosphorylating proteins that are already phosphorylated on a specific motif recognized by the POLO box domains. Phosphorylates CPAP, NPM1, RAPGEF2, RASGRF1, SNCA, SIPA1L1 and SYNGAP1. Plays a key role in synaptic plasticity and memory by regulating the Ras and Rap protein signaling: required for overactivity-dependent spine remodeling by phosphorylating the Ras activator RASGRF1 and the Rap inhibitor SIPA1L1 leading to their degradation by the proteasome. Conversely, phosphorylates the Rap activator RAPGEF2 and the Ras inhibitor SYNGAP1, promoting their activity. Also regulates synaptic plasticity independently of kinase activity, via its interaction with NSF that disrupts the interaction between NSF and the GRIA2 subunit of AMPARs, leading to a rapid rundown of AMPAR-mediated current that occludes long term depression. Required for procentriole formation and centriole duplication by phosphorylating CPAP and NPM1, respectively. Its induction by p53/TP53 suggests that it may participate in the mitotic checkpoint following stress. The polypeptide is Serine/threonine-protein kinase PLK2 (PLK2) (Pongo abelii (Sumatran orangutan)).